The following is a 176-amino-acid chain: Inner membrane-spanning protein YciB (176 aa).

Helical transmembrane passes span 3 to 23 (FLFD…WGIF), 24 to 44 (TATA…AFRH), 49 to 69 (TMLW…LVLH), 81 to 101 (LYWL…NNLI), 121 to 141 (VAWA…VHNF), and 149 to 169 (FKLF…SLWL).

Belongs to the YciB family.

It localises to the cell inner membrane. Its function is as follows. Plays a role in cell envelope biogenesis, maintenance of cell envelope integrity and membrane homeostasis. This Burkholderia vietnamiensis (strain G4 / LMG 22486) (Burkholderia cepacia (strain R1808)) protein is Inner membrane-spanning protein YciB.